Here is a 470-residue protein sequence, read N- to C-terminus: Monocarboxylate transporter 4 (470 aa).

The Cytoplasmic segment spans residues 1–17; the sequence is MGGAVVDEGPTGIKAPD. The helical transmembrane segment at 18–38 threads the bilayer; that stretch reads GGWGWAVLFGCFIITGFSYAF. The Extracellular portion of the chain corresponds to 39 to 61; sequence PKAVSVFFKELMHEFGIGYSDTA. A helical transmembrane segment spans residues 62-82; the sequence is WISSILLAMLYGTGPLCSVCV. Over 83-84 the chain is Cytoplasmic; sequence NR. The chain crosses the membrane as a helical span at residues 85-105; the sequence is FGCRPVMLVGGLFASLGMVAA. The Extracellular portion of the chain corresponds to 106–109; that stretch reads SFCR. Residues 110-130 form a helical membrane-spanning segment; that stretch reads SIIQIYLTTGVITGLGLALNF. The Cytoplasmic portion of the chain corresponds to 131-149; it reads QPSLIMLNRYFNKRRPIAN. A helical transmembrane segment spans residues 150-170; sequence GLAAAGSPVFLCALSPLGQLL. At 171–179 the chain is on the extracellular side; sequence QDHYGWRGG. The chain crosses the membrane as a helical span at residues 180-200; the sequence is FLILGGLLLNCCVCAALMRPL. At 201 to 231 the chain is on the cytoplasmic side; the sequence is VAPQVGGGTEPRGPQRPPQRLLDLSVFRDRG. A helical membrane pass occupies residues 232–252; sequence FLIYAVAASIMVLGLFVPPVF. The Extracellular portion of the chain corresponds to 253–267; it reads VVSYAKDMGVPDTKA. A helical transmembrane segment spans residues 268–288; the sequence is AFLLTILGFIDIFARPTAGFI. Topologically, residues 289–298 are cytoplasmic; it reads TGLKKVRPYS. The helical transmembrane segment at 299–319 threads the bilayer; the sequence is VYLFSFAMFFNGFTDLTGSTA. Residues 320-321 lie on the Extracellular side of the membrane; the sequence is TD. The helical transmembrane segment at 322-342 threads the bilayer; that stretch reads YGGLVVFCIFFGISYGMVGAL. Residues 343-355 lie on the Cytoplasmic side of the membrane; it reads QFEVLMAIVGTQK. Residues 356–376 form a helical membrane-spanning segment; sequence FSSAIGLVLLLEAVAVLIGPP. At 377–391 the chain is on the extracellular side; that stretch reads SGGKLLDATKVYKYV. A helical transmembrane segment spans residues 392 to 412; the sequence is FILAGAEVLTSSLVLLLGNFF. Residues 413-470 lie on the Cytoplasmic side of the membrane; sequence CIGKRKRPEVTEPEEVASEEKLHKPPVDVGVDSREVEHFLKAEPEKNGEVVHTPETSV. Basolateral sorting signal stretches follow at residues 429-446 and 446-470; these read ASEE…VDSR and REVE…ETSV. Residue Ser430 is modified to Phosphoserine. Thr465 is modified (phosphothreonine). Position 469 is a phosphoserine (Ser469).

It belongs to the major facilitator superfamily. Monocarboxylate porter (TC 2.A.1.13) family. In terms of assembly, interacts with BSG; interaction mediates SLC16A3 targeting to the plasma membrane.

The protein resides in the cell membrane. It localises to the basolateral cell membrane. The catalysed reaction is (S)-lactate(in) + H(+)(in) = (S)-lactate(out) + H(+)(out). The enzyme catalyses pyruvate(out) + H(+)(out) = pyruvate(in) + H(+)(in). Its function is as follows. Proton-dependent transporter of monocarboxylates such as L-lactate and pyruvate. Plays a predominant role in the L-lactate efflux from highly glycolytic cells. The protein is Monocarboxylate transporter 4 (Slc16a3) of Mus musculus (Mouse).